The following is a 319-amino-acid chain: Alpha-hemolysin (319 aa).

The signal sequence occupies residues 1 to 26 (MKTRIVSSVTTTLLLGSILMNPVAGA).

The protein belongs to the aerolysin family. In terms of assembly, self-assembles to first form a non-lytic oligomeric intermediate, and then, a mushroom-shaped homoheptamer structure of 100 Angstroms in length and up to 100 Angstroms in diameter. Interacts with human ADAM10; this interaction is required for toxin pore formation, disruption of focal adhesions, and hly-mediated cytotoxicity.

It localises to the secreted. In terms of biological role, alpha-toxin binds to the membrane of eukaryotic cells (particularly red blood cells, RBC) forming pores, resulting in hemolysis, with the release of low-molecular weight molecules leading to eventual osmotic RBC lysis. Human RBCs bind much less alpha-toxin than do rabbit RBCs. Heptamer oligomerization and pore formation is required for lytic activity. The sequence is that of Alpha-hemolysin (hly) from Staphylococcus aureus.